Consider the following 593-residue polypeptide: Melanopsin-A (593 aa).

The Extracellular segment spans residues 1–77 (MMSGAAHSVR…VDVPDHAHYT (77 aa)). Residues 78–98 (IGAVILTVGITGMLGNFLVIY) form a helical membrane-spanning segment. The Cytoplasmic segment spans residues 99–112 (AFSRSRTLRTPANL). A helical membrane pass occupies residues 113 to 133 (FIINLAITDFLMCATQAPIFF). The Extracellular segment spans residues 134–150 (TTSMHKRWIFGEKGCEL). An intrachain disulfide couples Cys-148 to Cys-226. A helical transmembrane segment spans residues 151–171 (YAFCGALFGICSMITLMVIAV). Residues 172–191 (DRYFVITRPLASIGVLSQKR) lie on the Cytoplasmic side of the membrane. A helical membrane pass occupies residues 192–212 (ALLILLVAWVYSLGWSLPPFF). Over 213–243 (GWSAYVPEGLLTSCTWDYMTFTPSVRAYTML) the chain is Extracellular. The helical transmembrane segment at 244 to 264 (LFIFVFFIPLIVIIYCYFFIF) threads the bilayer. Residues 265–300 (RSIRTTNEAVGKINGDNKRDSMKRFQRLKNEWKMAK) lie on the Cytoplasmic side of the membrane. The chain crosses the membrane as a helical span at residues 301–321 (IALIVILMYVISWSPYSTVAL). Topologically, residues 322 to 336 (TAFAGYSDFLTPYMN) are extracellular. Residues 337–357 (SVPAVIAKASAIHNPIIYAIT) traverse the membrane as a helical segment. At Lys-344 the chain carries N6-(retinylidene)lysine. Over 358 to 593 (HPKYRLAIAK…HIDNHRPQYL (236 aa)) the chain is Cytoplasmic. 2 disordered regions span residues 397 to 449 (TVTS…RQVS) and 547 to 593 (RSNV…PQYL). A compositionally biased stretch (polar residues) spans 414–449 (TGKSRLSSASDSESGWTDTEADLSSMSSRPASRQVS). The span at 581–593 (ESGHIDNHRPQYL) shows a compositional bias: basic and acidic residues.

The protein belongs to the G-protein coupled receptor 1 family. Opsin subfamily.

The protein resides in the cell membrane. Functionally, photoreceptor implicated in non-image-forming responses to light. May be able to isomerize covalently bound all-trans retinal back to 11-cis retinal. The protein is Melanopsin-A (opn4a) of Danio rerio (Zebrafish).